The primary structure comprises 402 residues: MALKSGEERLKEMEAEMALFEQEVLGGPVAPTVVEAVPVALAMPTLPMVRPIIGTNTYREVQQSLEARAATLVGPPPTFVCPAIPAVPPPQVLRPAFVPHVLQRPAGGHRMPMMRGPPPHGMIAPPLPRPPPPPPSMMAPPVVGPPQPPMAPVGPPMGPMPPVGGMNPMALGPPRSMTQAPAKITPSVIQAAPTVYTAPPVSKRIDLKSQKQARMEQLSALVAEQQAAVLAAGLLDSKKETASDDSVIGPSMPEPEPVHVEPVDTSTEDKKKGKQEKVKKCIRVAAGVSWEDTSLLEWETDDFRIFCGDLGNEVNDDILARAFSRYPSFLKAKVVRDKRTGKTKGYGFVSFKDPNDYVRAMREMNGRYVGSRPIKLRKSAWKDRNLEVVRKNQKEKKKLGLR.

A disordered region spans residues 240 to 275 (ETASDDSVIGPSMPEPEPVHVEPVDTSTEDKKKGKQ). Over residues 256 to 275 (EPVHVEPVDTSTEDKKKGKQ) the composition is skewed to basic and acidic residues. The RRM domain occupies 303–381 (FRIFCGDLGN…RPIKLRKSAW (79 aa)).

It belongs to the RRM RBM42 family.

It localises to the nucleus. Its subcellular location is the cytoplasm. May bind RNA. The chain is RNA-binding protein 42 (rbm42) from Danio rerio (Zebrafish).